A 110-amino-acid polypeptide reads, in one-letter code: Quaternary ammonium compound-resistance protein QacF (110 aa).

Transmembrane regions (helical) follow at residues 1 to 21, 31 to 51, 58 to 78, and 85 to 105; these read MKNW…TSAL, VPSV…SLAL, IAYA…AWIF, and FWAF…NLLS.

It belongs to the drug/metabolite transporter (DMT) superfamily. Small multidrug resistance (SMR) (TC 2.A.7.1) family.

It is found in the cell membrane. Multidrug exporter. Is implicated for the resistance to bacteriocidal quaternary ammonium compounds. The chain is Quaternary ammonium compound-resistance protein QacF (qacF) from Klebsiella aerogenes (Enterobacter aerogenes).